The chain runs to 334 residues: Regulatory protein E2 (334 aa).

A transactivation domain region spans residues 1 to 127 (MYLCLESLQK…SKVLSPSVTS (127 aa)). The disordered stretch occupies residues 127 to 240 (SSLRVGSTGG…SSTPKRQASS (114 aa)). Residues 229–240 (GRSSTPKRQASS) are compositionally biased toward polar residues. The DNA-binding domain stretch occupies residues 251–334 (DPPVLLLQGA…SAVKGALDGL (84 aa)).

It belongs to the papillomaviridae E2 protein family. Binds DNA as homodimer. Interacts with protein E1; this interaction greatly increases E1 DNA-binding activity. Interacts with protein L1; this interaction enhances E2-dependent replication and transcription activation. Interacts with protein L2; this interaction inhibits E2 transcriptional activity but not DNA replication function E2. Interacts with protein E7; this interaction inhibits E7 oncogenic activity. Interacts with host TAF1; this interaction modulates E2-dependent transcriptional regulation. Interacts with host BRD4; this interaction mediates E2 transcriptional activation function. Additionally, the interaction with host BRD4 on mitotic chromosomes mediates tethering of the viral genome. Interacts with host TOPBP1; this interaction is required for optimal viral DNA replication. Post-translationally, phosphorylated.

The protein resides in the host nucleus. Its function is as follows. Plays a role in the initiation of viral DNA replication. A dimer of E2 interacts with a dimer of E1 in order to improve specificity of E1 DNA binding activity. Once the complex recognizes and binds DNA at specific sites, the E2 dimer is removed from DNA. E2 also regulates viral transcription through binding to the E2RE response element (5'-ACCNNNNNNGGT-3') present in multiple copies in the regulatory regions of the viral genome. Activates or represses transcription depending on E2RE's position with regards to proximal promoter elements including the TATA-box. Repression occurs by sterically hindering the assembly of the transcription initiation complex. This Bos taurus (Bovine) protein is Regulatory protein E2.